The primary structure comprises 250 residues: NH(3)-dependent NAD(+) synthetase (250 aa).

30–37 (GVSGGIDS) is an ATP binding site. Position 36 (D36) interacts with Mg(2+). R117 is a deamido-NAD(+) binding site. An ATP-binding site is contributed by T137. Residue E142 coordinates Mg(2+). 2 residues coordinate deamido-NAD(+): K150 and D157. Residues K166 and S188 each coordinate ATP. 234 to 235 (HK) is a binding site for deamido-NAD(+).

This sequence belongs to the NAD synthetase family. Homodimer.

It catalyses the reaction deamido-NAD(+) + NH4(+) + ATP = AMP + diphosphate + NAD(+) + H(+). Its pathway is cofactor biosynthesis; NAD(+) biosynthesis; NAD(+) from deamido-NAD(+) (ammonia route): step 1/1. In terms of biological role, catalyzes the ATP-dependent amidation of deamido-NAD to form NAD. Uses ammonia as a nitrogen source. The polypeptide is NH(3)-dependent NAD(+) synthetase (Mannheimia succiniciproducens (strain KCTC 0769BP / MBEL55E)).